The sequence spans 244 residues: tRNA (guanine-N(1)-)-methyltransferase (244 aa).

S-adenosyl-L-methionine-binding positions include Gly-112 and 131–136 (LGDFIL). Residues 211–244 (IKRTSDRRPDLLEKWQQEKKPGSREQGSREQGEK) are disordered.

The protein belongs to the RNA methyltransferase TrmD family. In terms of assembly, homodimer.

Its subcellular location is the cytoplasm. It carries out the reaction guanosine(37) in tRNA + S-adenosyl-L-methionine = N(1)-methylguanosine(37) in tRNA + S-adenosyl-L-homocysteine + H(+). Its function is as follows. Specifically methylates guanosine-37 in various tRNAs. In Trichormus variabilis (strain ATCC 29413 / PCC 7937) (Anabaena variabilis), this protein is tRNA (guanine-N(1)-)-methyltransferase.